The primary structure comprises 280 residues: Chlorophyll a-b binding protein CP26, chloroplastic (280 aa).

The transit peptide at 1–48 (MASLGVSEMLGTPLNFRAVSRSSAPLASSPSTFKTVALFSKKKPAPAK) directs the protein to the chloroplast. Chlorophyll b is bound at residue F70. Residues Y95, E114, and H117 each contribute to the chlorophyll a site. The next 2 membrane-spanning stretches (helical) occupy residues 110–130 (YQAF…GFII) and 167–187 (IPIN…GAEY). The chlorophyll b site is built by R119, I167, E186, and R189. The chlorophyll a site is built by K224, E225, N228, R230, Q242, and H257. A helical transmembrane segment spans residues 231–251 (LAMFAMLGFFIQAYVTGEGPV).

It belongs to the light-harvesting chlorophyll a/b-binding (LHC) protein family. As to quaternary structure, forms heterotrimers with LHCB3. The LHC complex consists of chlorophyll a-b binding proteins. The cofactor is Binds at least 14 chlorophylls (8 Chl-a and 6 Chl-b) and carotenoids such as lutein and neoxanthin.. Photoregulated by reversible phosphorylation of its threonine residues.

Its subcellular location is the plastid. It is found in the chloroplast thylakoid membrane. The light-harvesting complex (LHC) functions as a light receptor, it captures and delivers excitation energy to photosystems with which it is closely associated. In Arabidopsis thaliana (Mouse-ear cress), this protein is Chlorophyll a-b binding protein CP26, chloroplastic (LHCB5).